The sequence spans 252 residues: Ribonuclease 3 (252 aa).

Residues 3–125 (LATLETRLDH…IFGAAFLDGG (123 aa)) enclose the RNase III domain. Glu38 contacts Mg(2+). Asp42 is a catalytic residue. Positions 111 and 114 each coordinate Mg(2+). The active site involves Glu114. Residues 152–222 (DAKTLLQEFL…AKLALEAAQA (71 aa)) form the DRBM domain.

Belongs to the ribonuclease III family. As to quaternary structure, homodimer. Mg(2+) serves as cofactor.

Its subcellular location is the cytoplasm. The enzyme catalyses Endonucleolytic cleavage to 5'-phosphomonoester.. Functionally, digests double-stranded RNA. Involved in the processing of primary rRNA transcript to yield the immediate precursors to the large and small rRNAs (23S and 16S). Processes some mRNAs, and tRNAs when they are encoded in the rRNA operon. Processes pre-crRNA and tracrRNA of type II CRISPR loci if present in the organism. The protein is Ribonuclease 3 of Bordetella petrii (strain ATCC BAA-461 / DSM 12804 / CCUG 43448).